The chain runs to 427 residues: ETS domain-containing protein Elk-1 (427 aa).

A DNA-binding region (ETS) is located at residues 5–86 (VTLWQFLLQL…SGQKFVYKFV (82 aa)). Disordered stretches follow at residues 116-146 (ATVHSGPGDNATGKPGTPKGAGMTGQGGLAR), 166-202 (LQPQPPLHPRPASVLPNTTPAGVPAPPSGSRSTSPNP), and 226-252 (PNQKSEELSLNPGFGRPQPPEVKVEGP). Glycyl lysine isopeptide (Lys-Gly) (interchain with G-Cter in SUMO) cross-links involve residues Lys-229, Lys-248, and Lys-253. Over residues 300–310 (STSTTEITQPQ) the composition is skewed to polar residues. The segment at 300 to 350 (STSTTEITQPQKGRKPRDLELPLSPSLLGGQGPERTPGSGTSSGLQAQGPA) is disordered. The residue at position 323 (Ser-323) is a Phosphoserine; by MAPK1. 4 positions are modified to phosphothreonine; by MAPK1: Thr-335, Thr-352, Thr-362, and Thr-367. Residues 348–398 (GPALTPSLLPTHTLTPVLLTPSSLPPSIHFWSTLSPIAPRSPAKLSFQFPS) are sufficient for interaction with MAD2L2. The O-linked (GlcNAc) threonine glycan is linked to Thr-380. Position 382 is a phosphoserine; by MAPK1 and MAPK8 (Ser-382). A Phosphoserine; by MAPK1 modification is found at Ser-388. At Thr-416 the chain carries Phosphothreonine; by MAPK1. The residue at position 421 (Ser-421) is a Phosphoserine; by MAPK1.

Belongs to the ETS family. As to quaternary structure, interacts in its sumoylated form with PIAS2/PIASX which enhances its transcriptional activator activity. Interacts with MAD2L2; the interaction is direct and promotes phosphorylation by the kinases MAPK8 and/or MAPK9. Interacts with POU1F1. In terms of processing, sumoylation represses transcriptional activator activity as it results in recruitment of HDAC2 to target gene promoters which leads to decreased histone acetylation and reduced transactivator activity. It also regulates nuclear retention. On mitogenic stimulation, phosphorylated on C-terminal serine and threonine residues by MAPK1. Ser-382 and Ser-388 are the preferred sites for MAPK1. In vitro, phosphorylation by MAPK1 potentiates ternary complex formation with the serum responses factors, SRE and SRF. Also phosphorylated on Ser-382 by MAPK8 and/or MAKP9. Phosphorylation leads to loss of sumoylation and restores transcriptional activator activity. Phosphorylated and activated by CAMK4, MAPK11, MAPK12 and MAPK14. Upon bFGF stimulus, phosphorylated by PAK1. Phosphorylated by PRP4K at Thr-416; phosphorylation activation ELK1 transcriptional activity.

It is found in the nucleus. Its function is as follows. Transcription factor that binds to purine-rich DNA sequences. Forms a ternary complex with SRF and the ETS and SRF motifs of the serum response element (SRE) on the promoter region of immediate early genes such as FOS and IER2. Induces target gene transcription upon JNK and MAPK-signaling pathways stimulation. The polypeptide is ETS domain-containing protein Elk-1 (Rattus norvegicus (Rat)).